Reading from the N-terminus, the 340-residue chain is GTPase Obg (340 aa).

Residues 1–158 (MSFIDEAKVY…KWIILKLKII (158 aa)) enclose the Obg domain. The 167-residue stretch at 159–325 (SDVGIIGLPN…LSILIKHINK (167 aa)) folds into the OBG-type G domain. GTP contacts are provided by residues 165-172 (GLPNAGKS), 190-194 (FTTLE), 211-214 (DIPG), 278-281 (NKCD), and 306-308 (SSI). Residues Ser172 and Thr192 each coordinate Mg(2+).

Belongs to the TRAFAC class OBG-HflX-like GTPase superfamily. OBG GTPase family. Monomer. The cofactor is Mg(2+).

The protein localises to the cytoplasm. An essential GTPase which binds GTP, GDP and possibly (p)ppGpp with moderate affinity, with high nucleotide exchange rates and a fairly low GTP hydrolysis rate. Plays a role in control of the cell cycle, stress response, ribosome biogenesis and in those bacteria that undergo differentiation, in morphogenesis control. The sequence is that of GTPase Obg from Ehrlichia ruminantium (strain Gardel).